The chain runs to 392 residues: Heat-inducible transcription repressor HrcA (392 aa).

It belongs to the HrcA family.

Negative regulator of class I heat shock genes (grpE-dnaK-dnaJ and groELS operons). Prevents heat-shock induction of these operons. The chain is Heat-inducible transcription repressor HrcA from Chlamydia muridarum (strain MoPn / Nigg).